A 1355-amino-acid polypeptide reads, in one-letter code: Probable major glycoprotein (1355 aa).

Residues 1-16 (MKKTMLAIILIPLVYA) form the signal peptide. 21 N-linked (GlcNAc...) asparagine; by host glycosylation sites follow: asparagine 81, asparagine 112, asparagine 129, asparagine 169, asparagine 173, asparagine 192, asparagine 542, asparagine 655, asparagine 682, asparagine 744, asparagine 780, asparagine 811, asparagine 815, asparagine 860, asparagine 865, asparagine 882, asparagine 895, asparagine 1213, asparagine 1225, asparagine 1267, and asparagine 1274. Residues 1245–1299 (QIVSMEMEIQDLKLELIQLQKINTSVHMENITGDIDAMKATIEEYRAEMAKLRVT) adopt a coiled-coil conformation. Residues 1308–1328 (FIYAILGVIAIGALIAIIFMA) traverse the membrane as a helical segment.

It is found in the host membrane. This chain is Probable major glycoprotein (ORF46), found in Ictaluridae (bullhead catfishes).